A 557-amino-acid chain; its full sequence is GYGLTRIPHLNKDLAFTLEERQQLNIHGLLPPCFISQDIQVLRVIKNFERLNSDFDRYLLLMDLQDRNEKLFYKVLMSDIEKFMPIVYTPTVGLACQQYSLAFRKPRGLFISIHDRGHVASVLNAWPEDVIKAVVVTDGERILGLGDLGCNGMGIPVGKLALYTACGGVNPQECLPVILDVGTENEELLKDPLYIGLRQRRVRGPEYDDFLDEFMEAVSSKYGMNCLIQFEDFANINAFRLLKKYQNQYCTFNDDIQGTASVAVAGILAALRITKNKLSDQTILFQGAGEAALGIAHLIVMAMEKEGVPKEKAIKKIWLVDSKGLIVKGRAALTNEKEEFAHEHEEMKNLEAIVQDIKPTALIGVAAIGGAFSEQILKDMAAFNERPIIFALSNPTSKAECTAERGYTLTQGRAIFASGSPFDPVTLPSGQTLYPGQGNNSYVFPGVALAVVACGLRHITDKIFLTTAEVIAQQVSDKHLEEGRLYPPLNTIRDVSLKIAEKIVRDAYQEKTATIYPEPSNKEAFVRSQMYSTDYDQILPDGYSWPEEAQKIQTKLD.

Residue Tyr88 is the Proton donor of the active site. NADP(+) is bound at residue Arg141. Lys159 functions as the Proton acceptor in the catalytic mechanism. Positions 231, 232, and 255 each coordinate a divalent metal cation. Residue Asp255 participates in NADP(+) binding. The residue at position 322 (Ser322) is a Phosphoserine. Asn394 serves as a coordination point for NADP(+).

Belongs to the malic enzymes family. In terms of assembly, homotetramer. Mg(2+) serves as cofactor. It depends on Mn(2+) as a cofactor.

The protein localises to the cytoplasm. The catalysed reaction is (S)-malate + NADP(+) = pyruvate + CO2 + NADPH. The enzyme catalyses oxaloacetate + H(+) = pyruvate + CO2. Catalyzes the oxidative decarboxylation of (S)-malate in the presence of NADP(+) and divalent metal ions, and decarboxylation of oxaloacetate. This Sus scrofa (Pig) protein is NADP-dependent malic enzyme (ME1).